The primary structure comprises 224 residues: tRNA (guanine-N(7)-)-methyltransferase (224 aa).

Residues Glu56, Glu81, Asp108, and Asp131 each coordinate S-adenosyl-L-methionine. Asp131 is an active-site residue. Substrate is bound by residues Lys135, Asp167, and 202–205; that span reads TKFE.

The protein belongs to the class I-like SAM-binding methyltransferase superfamily. TrmB family.

The catalysed reaction is guanosine(46) in tRNA + S-adenosyl-L-methionine = N(7)-methylguanosine(46) in tRNA + S-adenosyl-L-homocysteine. The protein operates within tRNA modification; N(7)-methylguanine-tRNA biosynthesis. Catalyzes the formation of N(7)-methylguanine at position 46 (m7G46) in tRNA. This Nitrosomonas eutropha (strain DSM 101675 / C91 / Nm57) protein is tRNA (guanine-N(7)-)-methyltransferase.